The following is a 476-amino-acid chain: Growth/differentiation factor 10 (476 aa).

The signal sequence occupies residues 1–29 (MAPGPARISLGSQLLPMVPLLLLLRGAGC). The propeptide occupies 30–366 (GHRGPSWSSL…EKTMQKARRR (337 aa)). The segment at 39–63 (LPSAAAGLQGDRDSQQSPGDAAAAL) is disordered. N-linked (GlcNAc...) asparagine glycans are attached at residues Asn114, Asn152, and Asn277. The tract at residues 268–301 (GDFEPGAAPNSSADPRVRRAAQVSKPLQDNELPG) is disordered. Disulfide bonds link Cys374/Cys441, Cys403/Cys473, and Cys407/Cys475. N-linked (GlcNAc...) asparagine glycosylation is present at Asn467.

Belongs to the TGF-beta family. Homodimer or heterodimer. Can form a non-covalent complex of the mature region and the pro-region. As to expression, highly expressed in epididymal adipose tissue, brain, bone and aorta and to a lesser extent in liver and spleen. Expressed at higher levels in preadipocytes than in mature adipocytes. Strongly expressed in glial cells of the cerebellum.

The protein resides in the secreted. Growth factor involved in osteogenesis and adipogenesis. Plays an inhibitory role in the process of osteoblast differentiation via SMAD2/3 pathway. Plays an inhibitory role in the process of adipogenesis. This chain is Growth/differentiation factor 10, found in Mus musculus (Mouse).